A 101-amino-acid chain; its full sequence is MTTNNLVLAGTITRSRQFDSPAGIAHTVVMLEHKSQRYEAGMLRNVYCQIQVVLSGERFNGVAKNLTAGVEIQVEGFINLQQSRNGQNRLVLHAENVELKT.

The region spanning 1 to 101 (MTTNNLVLAG…LHAENVELKT (101 aa)) is the SSB domain.

This sequence belongs to the PriB family. In terms of assembly, homodimer. Interacts with PriA and DnaT. Component of the replication restart primosome. Primosome assembly occurs via a 'hand-off' mechanism. PriA binds to replication forks, subsequently PriB then DnaT bind; DnaT then displaces ssDNA to generate the helicase loading substrate.

In terms of biological role, involved in the restart of stalled replication forks, which reloads the replicative helicase on sites other than the origin of replication; the PriA-PriB pathway is the major replication restart pathway. During primosome assembly it facilitates complex formation between PriA and DnaT on DNA; stabilizes PriA on DNA. Stimulates the DNA unwinding activity of PriA helicase. This is Replication restart protein PriB from Shewanella pealeana (strain ATCC 700345 / ANG-SQ1).